Consider the following 397-residue polypeptide: MKKSNRKSPTRIDEKDDICVPDSKDPGELQNMLNGGEYAPFVSPPILESNFIQVNRRGESIYLHNRANWVTVGICSSNPTTKTPNVMLLAHLTPTAQKDSEPLFTSLLTSPSPENLVLTRFLPLQFVTLSVHDAENMRIKVKLVSGRAYYLQLCAPACKQEALFCQWVELISLLNKEKAKASKVSEVSSLSEITNSTDITGSVDIMDIAAFPAIQTSHLSTCSDPNNDVESVDFSEFTDITDVTDDTDIPENEVTEAPDINIVTEVTEVTDICGVTASSGVRVVFENDDILKAKQEEKEKMENILKSGCLRDTKSKNEFRESPKRVTISNLALTFEGERCFQTTLTPEEDETEKSKEMSDRPREIRTMDSESTTLKAEEPRSRRTDSDTSDKCKLLN.

Disordered stretches follow at residues 1-24 (MKKS…PDSK) and 342-397 (QTTL…KLLN). 3 stretches are compositionally biased toward basic and acidic residues: residues 10–24 (TRID…PDSK), 353–369 (EKSK…RTMD), and 376–397 (KAEE…KLLN).

Belongs to the GARIN family. Interacts with CALM1.

The protein localises to the cell projection. It is found in the cilium. The protein resides in the flagellum. Its function is as follows. Seems to play a role in sperm motility. This chain is Golgi-associated RAB2 interactor protein 2 (GARIN2), found in Bos taurus (Bovine).